A 300-amino-acid polypeptide reads, in one-letter code: MNQTYGRLVSRAAIAATAMASALLLIKILAWWYTGSVSILAALVDSLVDIAASLTNLLVVRYSLQPADDEHTFGHGKAESLAALAQSMFISGSALFLFLTSIQNLIKPTPMNDPGVGIGVTVIALICTIILVTFQRWVVRKTQSQAVRADMLHYQSDVMMNGAILIALGLSWYGWHRADALFALGIGIYILYSALRMGYEAVQSLLDRALPDAERQEIIDIVTSWPGVSGAHDLRTRQSGPTRFIQIHLEMEDNLPLVQAHFVADQVEQAILRRFPGSDVIIHQDPCSVVPREGRKFELV.

The chain crosses the membrane as a helical span at residues 24–44 (LLIKILAWWYTGSVSILAALV). Residues Asp45 and Asp49 each coordinate Zn(2+). The next 2 helical transmembrane spans lie at 82–102 (AALAQSMFISGSALFLFLTSI) and 114–134 (PGVGIGVTVIALICTIILVTF). Zn(2+) contacts are provided by His153 and Asp157. Transmembrane regions (helical) follow at residues 156 to 176 (SDVMMNGAILIALGLSWYGWH) and 178 to 198 (ADALFALGIGIYILYSALRMG).

It belongs to the cation diffusion facilitator (CDF) transporter (TC 2.A.4) family. FieF subfamily. In terms of assembly, homodimer.

Its subcellular location is the cell inner membrane. It carries out the reaction Zn(2+)(in) + H(+)(out) = Zn(2+)(out) + H(+)(in). The catalysed reaction is Cd(2+)(in) + H(+)(out) = Cd(2+)(out) + H(+)(in). The enzyme catalyses Fe(2+)(in) + H(+)(out) = Fe(2+)(out) + H(+)(in). In terms of biological role, divalent metal cation transporter which exports Zn(2+), Cd(2+) and possibly Fe(2+). May be involved in zinc and iron detoxification by efflux. This Salmonella agona (strain SL483) protein is Cation-efflux pump FieF.